A 392-amino-acid polypeptide reads, in one-letter code: LL-diaminopimelate aminotransferase (392 aa).

Residues Tyr-13 and Gly-38 each coordinate substrate. Residues Tyr-67, 102–103, Tyr-127, Asn-177, Tyr-208, and 236–238 each bind pyridoxal 5'-phosphate; these read SK and SCS. Residues Lys-103, Tyr-127, and Asn-177 each contribute to the substrate site. At Lys-239 the chain carries N6-(pyridoxal phosphate)lysine. Arg-247 is a pyridoxal 5'-phosphate binding site. A substrate-binding site is contributed by Arg-366.

The protein belongs to the class-I pyridoxal-phosphate-dependent aminotransferase family. LL-diaminopimelate aminotransferase subfamily. Homodimer. Pyridoxal 5'-phosphate serves as cofactor.

It catalyses the reaction (2S,6S)-2,6-diaminopimelate + 2-oxoglutarate = (S)-2,3,4,5-tetrahydrodipicolinate + L-glutamate + H2O + H(+). It participates in amino-acid biosynthesis; L-lysine biosynthesis via DAP pathway; LL-2,6-diaminopimelate from (S)-tetrahydrodipicolinate (aminotransferase route): step 1/1. Involved in the synthesis of meso-diaminopimelate (m-DAP or DL-DAP), required for both lysine and peptidoglycan biosynthesis. Catalyzes the direct conversion of tetrahydrodipicolinate to LL-diaminopimelate. Can also use m-DAP instead of LL-DAP as the amino-group donor. The polypeptide is LL-diaminopimelate aminotransferase (Gloeobacter violaceus (strain ATCC 29082 / PCC 7421)).